A 179-amino-acid polypeptide reads, in one-letter code: MGIVIQHNKDRLVRPKQPLSEDITLLVKIYRLPGSKCSTAPFNKVVLRRLFMSRTHRPPMSVSRMIRKMKLPGRENRTAVVVGTVTDDVRIHEIPNLKVSALKITRRNRTRILKFVQIMRFVGLALAAPNRQKSVLLSAPRNARDVSRHFANAPSIPHTKPYVLSNKLRRRGSKLTYNN.

It belongs to the eukaryotic ribosomal protein eL18 family. Component of the large ribosomal subunit.

It localises to the cytoplasm. The protein localises to the cytosol. Its subcellular location is the rough endoplasmic reticulum. Its function is as follows. Component of the large ribosomal subunit. The ribosome is a large ribonucleoprotein complex responsible for the synthesis of proteins in the cell. This is Large ribosomal subunit protein eL18 (rpl18) from Salmo salar (Atlantic salmon).